The primary structure comprises 104 residues: ATP-dependent Clp protease adapter protein ClpS (104 aa).

It belongs to the ClpS family. As to quaternary structure, binds to the N-terminal domain of the chaperone ClpA.

Its function is as follows. Involved in the modulation of the specificity of the ClpAP-mediated ATP-dependent protein degradation. The sequence is that of ATP-dependent Clp protease adapter protein ClpS from Nitratidesulfovibrio vulgaris (strain ATCC 29579 / DSM 644 / CCUG 34227 / NCIMB 8303 / VKM B-1760 / Hildenborough) (Desulfovibrio vulgaris).